The primary structure comprises 1402 residues: DNA-directed RNA polymerase subunit beta' (1402 aa).

Zn(2+) is bound by residues Cys71, Cys73, Cys86, and Cys89. Positions 462, 464, and 466 each coordinate Mg(2+). Cys808, Cys881, Cys888, and Cys891 together coordinate Zn(2+).

The protein belongs to the RNA polymerase beta' chain family. The RNAP catalytic core consists of 2 alpha, 1 beta, 1 beta' and 1 omega subunit. When a sigma factor is associated with the core the holoenzyme is formed, which can initiate transcription. It depends on Mg(2+) as a cofactor. Requires Zn(2+) as cofactor.

The catalysed reaction is RNA(n) + a ribonucleoside 5'-triphosphate = RNA(n+1) + diphosphate. DNA-dependent RNA polymerase catalyzes the transcription of DNA into RNA using the four ribonucleoside triphosphates as substrates. The sequence is that of DNA-directed RNA polymerase subunit beta' from Hyphomonas neptunium (strain ATCC 15444).